We begin with the raw amino-acid sequence, 162 residues long: Protein NrdI (162 aa).

It belongs to the NrdI family.

Probably involved in ribonucleotide reductase function. This Streptococcus pyogenes serotype M1 protein is Protein NrdI.